A 1015-amino-acid chain; its full sequence is Beta-galactosidase (1015 aa).

Glu-434 functions as the Proton donor in the catalytic mechanism. Catalysis depends on Glu-513, which acts as the Nucleophile.

The protein belongs to the glycosyl hydrolase 2 family. The cofactor is Mg(2+). It depends on Mn(2+) as a cofactor.

The catalysed reaction is Hydrolysis of terminal non-reducing beta-D-galactose residues in beta-D-galactosides.. The chain is Beta-galactosidase (lacZ) from Arthrobacter sp. (strain B7).